The chain runs to 72 residues: Translation initiation factor IF-1 (72 aa).

Residues 1–72 enclose the S1-like domain; the sequence is MSKQDVIEVE…TRGRIVYRYK (72 aa).

This sequence belongs to the IF-1 family. Component of the 30S ribosomal translation pre-initiation complex which assembles on the 30S ribosome in the order IF-2 and IF-3, IF-1 and N-formylmethionyl-tRNA(fMet); mRNA recruitment can occur at any time during PIC assembly.

Its subcellular location is the cytoplasm. Functionally, one of the essential components for the initiation of protein synthesis. Stabilizes the binding of IF-2 and IF-3 on the 30S subunit to which N-formylmethionyl-tRNA(fMet) subsequently binds. Helps modulate mRNA selection, yielding the 30S pre-initiation complex (PIC). Upon addition of the 50S ribosomal subunit IF-1, IF-2 and IF-3 are released leaving the mature 70S translation initiation complex. This is Translation initiation factor IF-1 from Pelotomaculum thermopropionicum (strain DSM 13744 / JCM 10971 / SI).